A 207-amino-acid polypeptide reads, in one-letter code: Probable molybdenum cofactor guanylyltransferase (207 aa).

GTP-binding positions include 9-11 (LAG), K21, and D97. D97 is a binding site for Mg(2+).

Belongs to the MobA family. Requires Mg(2+) as cofactor.

The protein localises to the cytoplasm. It carries out the reaction Mo-molybdopterin + GTP + H(+) = Mo-molybdopterin guanine dinucleotide + diphosphate. In terms of biological role, transfers a GMP moiety from GTP to Mo-molybdopterin (Mo-MPT) cofactor (Moco or molybdenum cofactor) to form Mo-molybdopterin guanine dinucleotide (Mo-MGD) cofactor. The sequence is that of Probable molybdenum cofactor guanylyltransferase from Trichormus variabilis (strain ATCC 29413 / PCC 7937) (Anabaena variabilis).